The chain runs to 491 residues: MSESNVSWEVVIGLETHVQLGTKSKIFTSASTTFGDDPNTHIDPVVCGLPGTLPVLNKKVLEYAVKAAMALNLNIASHSKFDRKQYFYPDLPKNYQISQFDEPIAEDGWIEVEVAEKGKETYVKKIGIERLHMEEDAGKLVHAGSDQLSGSTHSLVDYNRAGVALAEIVSKPDLRTGREAAEYAAEVRRIMRYLGVSDGNMQEGSLRCDVNISVRPTINDPFGTKVEIKNMNSFSAIQKACEYEIKRQIKAYESGEEVKQETRLWDEGKQLTKSMRSKEGSSDYRYFPDPDLGPIEVSNELKEKWRSELPELPAAKRNRYSTELGLSIYDARVLTDESSMATYFEKVVNEGGAAKSSANWITGDLAAYINSNRLTFDQLHFQPSELAEMLKMIDTGEISGKIAKEILPELLSKGGSPKQLVQERGLGMIGDPKVIEEIIDQLILKHPNEVESFRSGKKKLLGFFVGQLMKETKGKADPKLANQILNKKLQG.

It belongs to the GatB/GatE family. GatB subfamily. Heterotrimer of A, B and C subunits.

It carries out the reaction L-glutamyl-tRNA(Gln) + L-glutamine + ATP + H2O = L-glutaminyl-tRNA(Gln) + L-glutamate + ADP + phosphate + H(+). It catalyses the reaction L-aspartyl-tRNA(Asn) + L-glutamine + ATP + H2O = L-asparaginyl-tRNA(Asn) + L-glutamate + ADP + phosphate + 2 H(+). In terms of biological role, allows the formation of correctly charged Asn-tRNA(Asn) or Gln-tRNA(Gln) through the transamidation of misacylated Asp-tRNA(Asn) or Glu-tRNA(Gln) in organisms which lack either or both of asparaginyl-tRNA or glutaminyl-tRNA synthetases. The reaction takes place in the presence of glutamine and ATP through an activated phospho-Asp-tRNA(Asn) or phospho-Glu-tRNA(Gln). This Prochlorococcus marinus (strain NATL1A) protein is Aspartyl/glutamyl-tRNA(Asn/Gln) amidotransferase subunit B.